A 594-amino-acid chain; its full sequence is Alanine--tRNA ligase (594 aa).

Residues His456, His460, Cys558, and His562 each coordinate Zn(2+).

This sequence belongs to the class-II aminoacyl-tRNA synthetase family. The cofactor is Zn(2+).

Its subcellular location is the cytoplasm. The enzyme catalyses tRNA(Ala) + L-alanine + ATP = L-alanyl-tRNA(Ala) + AMP + diphosphate. Catalyzes the attachment of alanine to tRNA(Ala) in a two-step reaction: alanine is first activated by ATP to form Ala-AMP and then transferred to the acceptor end of tRNA(Ala). Also edits incorrectly charged Ser-tRNA(Ala) and Gly-tRNA(Ala) via its editing domain. The protein is Alanine--tRNA ligase (alaS) of Borreliella burgdorferi (strain ATCC 35210 / DSM 4680 / CIP 102532 / B31) (Borrelia burgdorferi).